The primary structure comprises 343 residues: Thiamine-phosphate synthase (343 aa).

Residues 1–123 are unknown; it reads MQQASPTAIA…GACCKQLRYR (123 aa). The tract at residues 124–343 is thiamine-phosphate synthase; the sequence is VYALESGLLG…LLTQLSRINP (220 aa). 4-amino-2-methyl-5-(diphosphooxymethyl)pyrimidine-binding positions include 171–175 and Asn203; that span reads QYRDK. Mg(2+)-binding residues include Asp204 and Asp223. Ser242 is a 4-amino-2-methyl-5-(diphosphooxymethyl)pyrimidine binding site. Position 268 to 270 (268 to 270) interacts with 2-[(2R,5Z)-2-carboxy-4-methylthiazol-5(2H)-ylidene]ethyl phosphate; sequence TPT. A 4-amino-2-methyl-5-(diphosphooxymethyl)pyrimidine-binding site is contributed by Lys271. Gly298 provides a ligand contact to 2-[(2R,5Z)-2-carboxy-4-methylthiazol-5(2H)-ylidene]ethyl phosphate.

It belongs to the thiamine-phosphate synthase family. It depends on Mg(2+) as a cofactor.

It catalyses the reaction 2-[(2R,5Z)-2-carboxy-4-methylthiazol-5(2H)-ylidene]ethyl phosphate + 4-amino-2-methyl-5-(diphosphooxymethyl)pyrimidine + 2 H(+) = thiamine phosphate + CO2 + diphosphate. The enzyme catalyses 2-(2-carboxy-4-methylthiazol-5-yl)ethyl phosphate + 4-amino-2-methyl-5-(diphosphooxymethyl)pyrimidine + 2 H(+) = thiamine phosphate + CO2 + diphosphate. The catalysed reaction is 4-methyl-5-(2-phosphooxyethyl)-thiazole + 4-amino-2-methyl-5-(diphosphooxymethyl)pyrimidine + H(+) = thiamine phosphate + diphosphate. It functions in the pathway cofactor biosynthesis; thiamine diphosphate biosynthesis; thiamine phosphate from 4-amino-2-methyl-5-diphosphomethylpyrimidine and 4-methyl-5-(2-phosphoethyl)-thiazole: step 1/1. Its function is as follows. Condenses 4-methyl-5-(beta-hydroxyethyl)thiazole monophosphate (THZ-P) and 2-methyl-4-amino-5-hydroxymethyl pyrimidine pyrophosphate (HMP-PP) to form thiamine monophosphate (TMP). The polypeptide is Thiamine-phosphate synthase (Synechocystis sp. (strain ATCC 27184 / PCC 6803 / Kazusa)).